The following is a 243-amino-acid chain: 7-cyano-7-deazaguanine synthase (243 aa).

9 to 19 (FSGGQDSTTCL) contacts ATP. The Zn(2+) site is built by cysteine 205, cysteine 220, cysteine 223, and cysteine 226.

This sequence belongs to the QueC family. The cofactor is Zn(2+).

The catalysed reaction is 7-carboxy-7-deazaguanine + NH4(+) + ATP = 7-cyano-7-deazaguanine + ADP + phosphate + H2O + H(+). It participates in purine metabolism; 7-cyano-7-deazaguanine biosynthesis. In terms of biological role, catalyzes the ATP-dependent conversion of 7-carboxy-7-deazaguanine (CDG) to 7-cyano-7-deazaguanine (preQ(0)). The protein is 7-cyano-7-deazaguanine synthase of Albidiferax ferrireducens (strain ATCC BAA-621 / DSM 15236 / T118) (Rhodoferax ferrireducens).